A 429-amino-acid chain; its full sequence is UDP-N-acetylglucosamine 1-carboxyvinyltransferase (429 aa).

22 to 23 contributes to the phosphoenolpyruvate binding site; it reads KN. R93 lines the UDP-N-acetyl-alpha-D-glucosamine pocket. The active-site Proton donor is the C117. At C117 the chain carries 2-(S-cysteinyl)pyruvic acid O-phosphothioketal. UDP-N-acetyl-alpha-D-glucosamine is bound by residues 122-126, D313, and I335; that span reads RPVDQ.

The protein belongs to the EPSP synthase family. MurA subfamily.

It is found in the cytoplasm. It carries out the reaction phosphoenolpyruvate + UDP-N-acetyl-alpha-D-glucosamine = UDP-N-acetyl-3-O-(1-carboxyvinyl)-alpha-D-glucosamine + phosphate. It participates in cell wall biogenesis; peptidoglycan biosynthesis. In terms of biological role, cell wall formation. Adds enolpyruvyl to UDP-N-acetylglucosamine. In Variovorax paradoxus (strain S110), this protein is UDP-N-acetylglucosamine 1-carboxyvinyltransferase.